Reading from the N-terminus, the 277-residue chain is Large ribosomal subunit protein uL2 (277 aa).

2 disordered regions span residues 32 to 58 (KSLT…RGGG) and 225 to 277 (VAMN…RRNN).

This sequence belongs to the universal ribosomal protein uL2 family. In terms of assembly, part of the 50S ribosomal subunit. Forms a bridge to the 30S subunit in the 70S ribosome.

In terms of biological role, one of the primary rRNA binding proteins. Required for association of the 30S and 50S subunits to form the 70S ribosome, for tRNA binding and peptide bond formation. It has been suggested to have peptidyltransferase activity; this is somewhat controversial. Makes several contacts with the 16S rRNA in the 70S ribosome. This is Large ribosomal subunit protein uL2 from Borrelia duttonii (strain Ly).